Consider the following 864-residue polypeptide: Protein translocase subunit SecA (864 aa).

ATP-binding positions include Q87, 105 to 109, and D494; that span reads GEGKT. Positions 809-864 are disordered; sequence AKATELRHKEQPAELSYSGGDEDGAKTPSRRNAPKVGRNDPCPCGSGKKYKKCCGA. Positions 810 to 820 are enriched in basic and acidic residues; sequence KATELRHKEQP. Zn(2+) contacts are provided by C850, C852, C861, and C862.

It belongs to the SecA family. In terms of assembly, monomer and homodimer. Part of the essential Sec protein translocation apparatus which comprises SecA, SecYEG and auxiliary proteins SecDF-YajC and YidC. Zn(2+) serves as cofactor.

The protein resides in the cell inner membrane. It localises to the cytoplasm. It carries out the reaction ATP + H2O + cellular proteinSide 1 = ADP + phosphate + cellular proteinSide 2.. Its function is as follows. Part of the Sec protein translocase complex. Interacts with the SecYEG preprotein conducting channel. Has a central role in coupling the hydrolysis of ATP to the transfer of proteins into and across the cell membrane, serving as an ATP-driven molecular motor driving the stepwise translocation of polypeptide chains across the membrane. This chain is Protein translocase subunit SecA, found in Oleidesulfovibrio alaskensis (strain ATCC BAA-1058 / DSM 17464 / G20) (Desulfovibrio alaskensis).